The sequence spans 244 residues: Carboxy-S-adenosyl-L-methionine synthase (244 aa).

S-adenosyl-L-methionine is bound by residues Tyr-40, 65–67 (GCS), 90–91 (DN), Asn-134, and Arg-201.

The protein belongs to the class I-like SAM-binding methyltransferase superfamily. Cx-SAM synthase family. Homodimer.

It carries out the reaction prephenate + S-adenosyl-L-methionine = carboxy-S-adenosyl-L-methionine + 3-phenylpyruvate + H2O. In terms of biological role, catalyzes the conversion of S-adenosyl-L-methionine (SAM) to carboxy-S-adenosyl-L-methionine (Cx-SAM). This is Carboxy-S-adenosyl-L-methionine synthase from Citrifermentans bemidjiense (strain ATCC BAA-1014 / DSM 16622 / JCM 12645 / Bem) (Geobacter bemidjiensis).